A 421-amino-acid polypeptide reads, in one-letter code: Voltage-dependent calcium channel gamma-8 subunit (421 aa).

The next 4 helical transmembrane spans lie at 19–39 (VQVL…TIAI), 127–147 (SSIF…CVAA), 157–177 (IILG…IGVI), and 207–227 (FGGL…NIYI). Residues serine 251 and serine 254 each carry the phosphoserine modification. Residues 271–304 (RRSRSSSRGSSEASPSRDASPGGPGGPGFASTDI) are disordered. A compositionally biased stretch (low complexity) spans 276–287 (SSRGSSEASPSR). A helical transmembrane segment spans residues 318 to 338 (VAAGLASAGGGGGGAGVGAYG). 2 disordered regions span residues 342–363 (GAAG…GFLT) and 378–421 (VTVT…TTPV). Pro residues predominate over residues 384–397 (PAAPAPAPPAPAAP). Positions 408-421 (ASNTNTLNRKTTPV) are enriched in polar residues.

This sequence belongs to the PMP-22/EMP/MP20 family. CACNG subfamily. In terms of assembly, interacts with CACNA1C. Identified in a complex with the L-type calcium channel subunits CACNA1C, CACNA2D1 and either CACNB1 or CACNB2. Acts as an auxiliary subunit for AMPA-selective glutamate receptors (AMPARs). Found in a complex with GRIA1, GRIA2, GRIA3, GRIA4, CNIH2, CNIH3, CACNG2, CACNG3, CACNG4, CACNG5 and CACNG7. Interacts with CNIH2. Found in a complex with GRIA1, GRIA2, GRIA3, GRIA4, DLG4 and CNIH2. Post-translationally, palmitoylated. Probably palmitoylated by ZDHHC3 and ZDHHC7.

The protein resides in the cell membrane. It localises to the postsynaptic density membrane. In terms of biological role, regulates the activity of L-type calcium channels that contain CACNA1C as pore-forming subunit. Regulates the trafficking and gating properties of AMPA-selective glutamate receptors (AMPARs). Promotes their targeting to the cell membrane and synapses and modulates their gating properties by slowing their rates of activation, deactivation and desensitization and by mediating their resensitization. Does not show subunit-specific AMPA receptor regulation and regulates all AMPAR subunits. Thought to stabilize the calcium channel in an inactivated (closed) state. The protein is Voltage-dependent calcium channel gamma-8 subunit of Rattus norvegicus (Rat).